The following is a 412-amino-acid chain: DnaJ homolog subfamily A member 2 (412 aa).

Residues 8–70 (KLYDILGVPP…EKRELYDRYG (63 aa)) form the J domain. Lysine 39 bears the N6-acetyllysine mark. 2 positions are modified to phosphoserine: serine 78 and serine 123. A CR-type zinc finger spans residues 130 to 214 (GKTTKLQLSK…CEGKKVIKEV (85 aa)). Lysine 134 is covalently cross-linked (Glycyl lysine isopeptide (Lys-Gly) (interchain with G-Cter in SUMO2)). Residues cysteine 143 and cysteine 146 each contribute to the Zn(2+) site. The stretch at 143–150 (CSACSGQG) is one CXXCXGXG motif repeat. Lysine 152 carries the post-translational modification N6-acetyllysine. The Zn(2+) site is built by cysteine 159, cysteine 162, cysteine 186, cysteine 189, cysteine 202, and cysteine 205. CXXCXGXG motif repeat units lie at residues 159–166 (CSACRGRG), 186–193 (CSDCNGEG), and 202–209 (CKKCEGKK). Residues 365–412 (IGETEEVELQEFDSTRGSGGGQRREAYNDSSDEESSSHHGPGVQCAHQ) form a disordered region. A Phosphotyrosine modification is found at tyrosine 391. Serine 394 and serine 395 each carry phosphoserine. Cysteine 409 carries the post-translational modification Cysteine methyl ester. A lipid anchor (S-farnesyl cysteine) is attached at cysteine 409. Residues 410–412 (AHQ) constitute a propeptide, removed in mature form.

The protein resides in the membrane. In terms of biological role, co-chaperone of Hsc70. Stimulates ATP hydrolysis and the folding of unfolded proteins mediated by HSPA1A/B (in vitro). The sequence is that of DnaJ homolog subfamily A member 2 (Dnaja2) from Rattus norvegicus (Rat).